Consider the following 448-residue polypeptide: MHISKPAGPLPAPVPFYRQLYFQVVVAIVLGALLGHFEPAFAESLKPLGDAFIKLVKMIIAPVIFLTIVTGIAGMTHLKTVGRVFAKSMTYFLFFSTLALIVGMVVAHVVQPGAGMNINPAELDQSAVNTYVQKSHELSLVGFLMDIIPATLISAFVDGNILQVLFVAVLFGIALALVGERGRPVLSFLEALTAPVFRLVHMLMKAAPIGAFGAIAFTIGKYGVESLVNLAWLVGSFYLTSLFFVLVILGIVCRLCGFSVLKLIRYLKAELLLVLGTSSSESALPSLMEKMEKAGCEKSVVGLVVPTGYSFNLDGTNIYMTLAALFIAQATNVDLTLGQQITLLAVAMLSSKGAAGVTGAGFITLAATLSVVPDVPVAGMALILGVDRFMSECRSLTNFIGNAVATVVVSRWENALDRDQLSLALDGRAPPLQAPVPPPDAVAPVSAR.

Transmembrane regions (helical) follow at residues 22–42 (FQVVVAIVLGALLGHFEPAFA), 55–75 (LVKMIIAPVIFLTIVTGIAGM), 90–110 (TYFLFFSTLALIVGMVVAHVV), 137–157 (ELSLVGFLMDIIPATLISAFV), 159–179 (GNILQVLFVAVLFGIALALVG), 199–219 (LVHMLMKAAPIGAFGAIAFTI), and 232–252 (WLVGSFYLTSLFFVLVILGIV). The interval 428-448 (RAPPLQAPVPPPDAVAPVSAR) is disordered. The segment covering 432 to 441 (LQAPVPPPDA) has biased composition (pro residues).

The protein belongs to the dicarboxylate/amino acid:cation symporter (DAACS) (TC 2.A.23) family.

It is found in the cell inner membrane. Its function is as follows. Responsible for the transport of dicarboxylates such as succinate, fumarate, and malate from the periplasm across the membrane. The sequence is that of C4-dicarboxylate transport protein from Xanthomonas campestris pv. campestris (strain 8004).